Consider the following 230-residue polypeptide: Small ribosomal subunit protein uS3c (230 aa).

The region spanning 39 to 109 (IRSFIHSKLS…QLRVNVVEIA (71 aa)) is the KH type-2 domain.

The protein belongs to the universal ribosomal protein uS3 family. Part of the 30S ribosomal subunit.

Its subcellular location is the plastid. It localises to the chloroplast. This chain is Small ribosomal subunit protein uS3c (rps3), found in Pyropia yezoensis (Susabi-nori).